A 971-amino-acid chain; its full sequence is Serine/threonine-protein kinase CLA4 (971 aa).

A disordered region spans residues 1–40 (MTSIYTSDLKNHRRAPPPPNGAAGSGSGSGSGSGSGSGSL). Gly residues predominate over residues 23–37 (AGSGSGSGSGSGSGS). The region spanning 67 to 178 (SKRQSGWVHV…WLDAFTTKCP (112 aa)) is the PH domain. Positions 201–221 (LTNGSLNGNSSSSPTSGLLSS) are disordered. The CRIB domain maps to 231-244 (VSGPINFTHKVHVG). Disordered regions lie at residues 292 to 517 (GGNS…KIHP) and 554 to 653 (SKKS…QLKK). Low complexity-rich tracts occupy residues 307-326 (NSKTNNNNNDPNNYSSTKNN) and 365-404 (LNGSSHQHTSSSGSLPSSGNNNNNNSTNNNNTKNVSPLNN). A compositionally biased stretch (polar residues) spans 423–433 (SGTSSDTYSNK). The segment covering 434–448 (NHQDRSGYEQQRQQR) has biased composition (basic and acidic residues). The segment covering 449–482 (TDSSQQQQQQKQHQYQQKSQQQQQQPQQPLSSHQ) has biased composition (low complexity). A compositionally biased stretch (pro residues) spans 491–500 (QVPPTLPSSG). Residues 554–578 (SKKSQQQLASKQPSPPSSQQQQQKP) show a composition bias toward low complexity. The segment covering 617–630 (NETSGVSKTPSPTD) has biased composition (polar residues). Residues 680–935 (FRIVEKAGQG…TDELLEHSFI (256 aa)) form the Protein kinase domain. Residues 686-694 (AGQGASGNV) and Lys710 contribute to the ATP site. Asp803 functions as the Proton acceptor in the catalytic mechanism.

This sequence belongs to the protein kinase superfamily. STE Ser/Thr protein kinase family. STE20 subfamily.

The catalysed reaction is L-seryl-[protein] + ATP = O-phospho-L-seryl-[protein] + ADP + H(+). It carries out the reaction L-threonyl-[protein] + ATP = O-phospho-L-threonyl-[protein] + ADP + H(+). Functionally, essential for virulence and morphological switching (hyphal formation) of C.albicans. The protein is Serine/threonine-protein kinase CLA4 (CLA4) of Candida albicans (Yeast).